Reading from the N-terminus, the 2136-residue chain is Protein Ycf2 (2136 aa).

Position 1404–1411 (1404–1411 (GPIETGRS)) interacts with ATP.

The protein belongs to the Ycf2 family.

The protein resides in the plastid. It localises to the chloroplast stroma. Functionally, probable ATPase of unknown function. Its presence in a non-photosynthetic plant (Epifagus virginiana) and experiments in tobacco indicate that it has an essential function which is probably not related to photosynthesis. This is Protein Ycf2 from Marchantia polymorpha (Common liverwort).